The sequence spans 216 residues: Probable transaldolase (216 aa).

Catalysis depends on K83, which acts as the Schiff-base intermediate with substrate.

The protein belongs to the transaldolase family. Type 3B subfamily.

Its subcellular location is the cytoplasm. It catalyses the reaction D-sedoheptulose 7-phosphate + D-glyceraldehyde 3-phosphate = D-erythrose 4-phosphate + beta-D-fructose 6-phosphate. Its pathway is carbohydrate degradation; pentose phosphate pathway; D-glyceraldehyde 3-phosphate and beta-D-fructose 6-phosphate from D-ribose 5-phosphate and D-xylulose 5-phosphate (non-oxidative stage): step 2/3. In terms of biological role, transaldolase is important for the balance of metabolites in the pentose-phosphate pathway. The sequence is that of Probable transaldolase from Desulforamulus reducens (strain ATCC BAA-1160 / DSM 100696 / MI-1) (Desulfotomaculum reducens).